The chain runs to 281 residues: Bifunctional protein FolD (281 aa).

NADP(+) contacts are provided by residues 165–167, threonine 192, and valine 233; that span reads GRG.

Belongs to the tetrahydrofolate dehydrogenase/cyclohydrolase family. In terms of assembly, homodimer.

The catalysed reaction is (6R)-5,10-methylene-5,6,7,8-tetrahydrofolate + NADP(+) = (6R)-5,10-methenyltetrahydrofolate + NADPH. The enzyme catalyses (6R)-5,10-methenyltetrahydrofolate + H2O = (6R)-10-formyltetrahydrofolate + H(+). The protein operates within one-carbon metabolism; tetrahydrofolate interconversion. In terms of biological role, catalyzes the oxidation of 5,10-methylenetetrahydrofolate to 5,10-methenyltetrahydrofolate and then the hydrolysis of 5,10-methenyltetrahydrofolate to 10-formyltetrahydrofolate. The sequence is that of Bifunctional protein FolD from Mycobacterium ulcerans (strain Agy99).